The chain runs to 209 residues: Vacuolar protein sorting-associated protein 28 homolog 1 (209 aa).

Residues 1-99 enclose the VPS28 N-terminal domain; sequence MEVKLWNDKR…TSGVPATVEH (99 aa). The 97-residue stretch at 109-205 folds into the VPS28 C-terminal domain; it reads SSASVVAECV…SYNSFMAALP (97 aa).

The protein belongs to the VPS28 family. In terms of assembly, component of the endosomal sorting required for transport complex I (ESCRT-I), composed of ELC, VPS28 and VPS37. Interacts with ELC.

It is found in the endosome. In terms of biological role, component of the ESCRT-I complex (endosomal sorting complex required for transport I), a regulator of vesicular trafficking process. Required for the sorting of endocytic ubiquitinated cargos into multivesicular bodies (MVBs). Mediates the association to the ESCRT-0 complex. The sequence is that of Vacuolar protein sorting-associated protein 28 homolog 1 (VPS28-1) from Arabidopsis thaliana (Mouse-ear cress).